The primary structure comprises 502 residues: ATP synthase subunit alpha (502 aa).

169 to 176 (GDRQTGKT) provides a ligand contact to ATP.

This sequence belongs to the ATPase alpha/beta chains family. In terms of assembly, F-type ATPases have 2 components, CF(1) - the catalytic core - and CF(0) - the membrane proton channel. CF(1) has five subunits: alpha(3), beta(3), gamma(1), delta(1), epsilon(1). CF(0) has three main subunits: a(1), b(2) and c(9-12). The alpha and beta chains form an alternating ring which encloses part of the gamma chain. CF(1) is attached to CF(0) by a central stalk formed by the gamma and epsilon chains, while a peripheral stalk is formed by the delta and b chains.

The protein localises to the cell membrane. It carries out the reaction ATP + H2O + 4 H(+)(in) = ADP + phosphate + 5 H(+)(out). Functionally, produces ATP from ADP in the presence of a proton gradient across the membrane. The alpha chain is a regulatory subunit. This is ATP synthase subunit alpha from Clostridium perfringens (strain ATCC 13124 / DSM 756 / JCM 1290 / NCIMB 6125 / NCTC 8237 / Type A).